The chain runs to 810 residues: Phenylalanine--tRNA ligase beta subunit (810 aa).

A tRNA-binding domain is found at 39-150; the sequence is RSWAAGVVLG…LDLPSGSPVG (112 aa). The 89-residue stretch at 407 to 495 folds into the B5 domain; the sequence is RGEAIINLRL…RLYGYDHFCE (89 aa). Residues D473, D479, E482, and E483 each coordinate Mg(2+). Residues 716 to 809 enclose the FDX-ACB domain; the sequence is SPYPAVARDL…LTKQFAVSLR (94 aa).

This sequence belongs to the phenylalanyl-tRNA synthetase beta subunit family. Type 1 subfamily. Tetramer of two alpha and two beta subunits. The cofactor is Mg(2+).

It is found in the cytoplasm. The enzyme catalyses tRNA(Phe) + L-phenylalanine + ATP = L-phenylalanyl-tRNA(Phe) + AMP + diphosphate + H(+). The protein is Phenylalanine--tRNA ligase beta subunit (pheT) of Synechocystis sp. (strain ATCC 27184 / PCC 6803 / Kazusa).